The primary structure comprises 1565 residues: Synemin (1565 aa).

A head region spans residues 1 to 10 (MLSWRLQTGP). Residues 11 to 49 (EKAELQELNARLYDYVCRVRELERENLLLEEELRGRRGR) form a coil 1A region. The tract at residues 11 to 320 (EKAELQELNA…YRALLEGESN (310 aa)) is interaction with DMD and UTRN. Residues 11–322 (EKAELQELNA…ALLEGESNPE (312 aa)) form the IF rod domain. Positions 50–58 (EGLWAEGQA) are linker 1. Residues 59–163 (RCAEEARSLR…ELRARAASLT (105 aa)) are coil 1B. Residues 164–186 (MHFRARATGPAAPPPRLREVHDS) form a linker 12 region. The coil 2 stretch occupies residues 187–300 (YALLVAESWR…LRDYQDLLQV (114 aa)). Residues 301 to 1565 (KTGLSLEVAT…EEEENDGHWF (1265 aa)) are tail. The interval 401–421 (SGYSSSATTQQENSYGKAVSS) is disordered. A compositionally biased stretch (polar residues) spans 402-421 (GYSSSATTQQENSYGKAVSS). Ser-429 is modified (phosphoserine). The segment at 472–609 (YRDRRDKVAA…VKDAGGGTGR (138 aa)) is disordered. Positions 498 to 577 (KKTEVKATRE…KEKSVREREV (80 aa)) are enriched in basic and acidic residues. 2 positions are modified to phosphothreonine: Thr-598 and Thr-651. Residues Ser-653 and Ser-777 each carry the phosphoserine modification. Positions 1019–1040 (LSKDEASEMEKAVESVVRESLS) are enriched in basic and acidic residues. Residues 1019–1060 (LSKDEASEMEKAVESVVRESLSRQRSPAPGSPDEEGGAEAPA) form a disordered region. 6 positions are modified to phosphoserine: Ser-1044, Ser-1049, Ser-1077, Ser-1087, Ser-1181, and Ser-1184. The segment at 1080–1105 (SEVAGGASHSSGQRTPQGPVSATVEV) is disordered. A compositionally biased stretch (polar residues) spans 1087–1105 (SHSSGQRTPQGPVSATVEV). Residues 1152–1463 (VSAGGDLSQA…GPKETSFTFQ (312 aa)) form an interaction with TLN1 and VCL region. 2 disordered regions span residues 1198–1221 (EAWG…GRHS) and 1332–1415 (QLGE…ETSE). The interaction with DMD and UTRN stretch occupies residues 1244–1563 (GKVGDYFATE…DNEEEENDGH (320 aa)). Polar residues predominate over residues 1354–1379 (ATHSHTSGRQTVMTEKSTFQSVVSES). Residue Ser-1435 is modified to Phosphoserine. An Omega-N-methylarginine modification is found at Arg-1487. Positions 1505–1525 (FKASAGEGDQAHREQGKEQAM) are disordered. Basic and acidic residues predominate over residues 1513–1525 (DQAHREQGKEQAM).

It belongs to the intermediate filament family. In terms of assembly, interacts with GFAP and VIM. Isoform 1 interacts with TLN1 and VCL. Isoform 2 interacts with DES and DTNA. Isoform 1 and isoform 2 interact with DMD and UTRN. Isoform 2 is strongly detected in adult heart, fetal skeletal muscles and fetal heart. Isoform 1 is weakly detected in fetal heart and also in fetal skeletal muscle. Isoform 1 and isoform 2 are detected in adult bladder (at protein level). The mRNA is predominantly expressed in heart and muscle with some expression in brain which may be due to tissue-specific isoforms.

It localises to the cytoplasm. It is found in the cytoskeleton. The protein resides in the cell junction. The protein localises to the adherens junction. Its function is as follows. Type-VI intermediate filament (IF) which plays an important cytoskeletal role within the muscle cell cytoskeleton. It forms heteromeric IFs with desmin and/or vimentin, and via its interaction with cytoskeletal proteins alpha-dystrobrevin, dystrophin, talin-1, utrophin and vinculin, is able to link these heteromeric IFs to adherens-type junctions, such as to the costameres, neuromuscular junctions, and myotendinous junctions within striated muscle cells. The chain is Synemin from Homo sapiens (Human).